Here is a 373-residue protein sequence, read N- to C-terminus: MHNQAPIQRRKSKRIYVGNVPIGDGAPIAVQSMTNTRTTDVAATVNQIKALERVGADIVRVSVPTMDAAEAFKLIKQQVNVPLVADIHFDYRIALKVAEYGVDCLRINPGNIGNEERIRMVVDCARDKNIPIRIGVNAGSLEKDLQEKYGEPTPQALLESAMRHVDHLDRLNFDQFKVSVKASDVFLAVESYRLLAKQIDQPLHLGITEAGGARSGAVKSAIGLGLLLSEGIGDTLRVSLAADPVEEIKVGFDILKSLRIRSRGINFIACPTCSRQEFDVIGTVNALEQRLEDIITPMDVSIIGCVVNGPGEALVSTLGVTGGNKKSGLYEDGVRKDRLDNNDMIDQLEARIRAKASMLDEARRIDVQQVEAK.

[4Fe-4S] cluster is bound by residues Cys270, Cys273, Cys305, and Glu312.

Belongs to the IspG family. It depends on [4Fe-4S] cluster as a cofactor.

It catalyses the reaction (2E)-4-hydroxy-3-methylbut-2-enyl diphosphate + oxidized [flavodoxin] + H2O + 2 H(+) = 2-C-methyl-D-erythritol 2,4-cyclic diphosphate + reduced [flavodoxin]. The protein operates within isoprenoid biosynthesis; isopentenyl diphosphate biosynthesis via DXP pathway; isopentenyl diphosphate from 1-deoxy-D-xylulose 5-phosphate: step 5/6. Functionally, converts 2C-methyl-D-erythritol 2,4-cyclodiphosphate (ME-2,4cPP) into 1-hydroxy-2-methyl-2-(E)-butenyl 4-diphosphate. In Klebsiella pneumoniae subsp. pneumoniae (strain ATCC 700721 / MGH 78578), this protein is 4-hydroxy-3-methylbut-2-en-1-yl diphosphate synthase (flavodoxin).